The chain runs to 96 residues: MHVTLVEINVHEDKVDEFIEVFRQNHLGSVQEEGNLRFDVLQDPEVNSRFYIYEAYKDEDAVAFHKTTPHYKTSVAKLESLMTGPRKKRLFNGLMP.

Positions 2-91 constitute an ABM domain; sequence HVTLVEINVH…MTGPRKKRLF (90 aa).

Belongs to the LsrG family. As to quaternary structure, homodimer.

Its subcellular location is the cytoplasm. The enzyme catalyses (2S)-2-hydroxy-3,4-dioxopentyl phosphate = 3-hydroxy-2,4-dioxopentyl phosphate. In terms of biological role, involved in the degradation of phospho-AI-2, thereby terminating induction of the lsr operon and closing the AI-2 signaling cycle. Catalyzes the conversion of (4S)-4-hydroxy-5-phosphonooxypentane-2,3-dione (P-DPD) to 3-hydroxy-5-phosphonooxypentane-2,4-dione (P-HPD). This chain is (4S)-4-hydroxy-5-phosphonooxypentane-2,3-dione isomerase, found in Escherichia coli O9:H4 (strain HS).